Here is a 171-residue protein sequence, read N- to C-terminus: Regulatory protein RecX (171 aa).

The protein belongs to the RecX family.

It is found in the cytoplasm. Modulates RecA activity. The chain is Regulatory protein RecX from Mycobacterium leprae (strain Br4923).